A 405-amino-acid chain; its full sequence is Farnesyl pyrophosphate synthase (405 aa).

Positions 158 and 162 each coordinate Mg(2+). Positions 158 to 162 (DDLAD) match the DDXXD motif motif.

This sequence belongs to the FPP/GGPP synthase family. Mg(2+) is required as a cofactor.

It catalyses the reaction isopentenyl diphosphate + (2E)-geranyl diphosphate = (2E,6E)-farnesyl diphosphate + diphosphate. Its pathway is pheromone biosynthesis. In terms of biological role, farnesyl pyrophosphate synthase involved in murgantiol biosynthesis, a male-released aggregation pheromone, by catalyzing the formation of (2E,6E)-farnesyl diphosphate. The sequence is that of Farnesyl pyrophosphate synthase from Murgantia histrionica (Harlequin bug).